A 124-amino-acid polypeptide reads, in one-letter code: Large ribosomal subunit protein bL12 (124 aa).

This sequence belongs to the bacterial ribosomal protein bL12 family. As to quaternary structure, homodimer. Part of the ribosomal stalk of the 50S ribosomal subunit. Forms a multimeric L10(L12)X complex, where L10 forms an elongated spine to which 2 to 4 L12 dimers bind in a sequential fashion. Binds GTP-bound translation factors.

Forms part of the ribosomal stalk which helps the ribosome interact with GTP-bound translation factors. Is thus essential for accurate translation. The chain is Large ribosomal subunit protein bL12 from Ralstonia pickettii (strain 12J).